We begin with the raw amino-acid sequence, 439 residues long: Chromosomal replication initiator protein DnaA (439 aa).

The interval 1–75 (MESWSRCLER…GIREVVLAIG (75 aa)) is domain I, interacts with DnaA modulators. A domain II region spans residues 75-101 (GSRPKTTELTVPVDTTGRLSQTVPFNG). Residues 102–319 (NLDTHYNFDN…GALNTLVARA (218 aa)) are domain III, AAA+ region. The ATP site is built by G147, G149, K150, and T151. The domain IV, binds dsDNA stretch occupies residues 320–439 (NFTGRAVTIE…WDKLMRKFSE (120 aa)).

Belongs to the DnaA family. Oligomerizes as a right-handed, spiral filament on DNA at oriC.

The protein localises to the cytoplasm. In terms of biological role, plays an essential role in the initiation and regulation of chromosomal replication. ATP-DnaA binds to the origin of replication (oriC) to initiate formation of the DNA replication initiation complex once per cell cycle. Binds the DnaA box (a 9 base pair repeat at the origin) and separates the double-stranded (ds)DNA. Forms a right-handed helical filament on oriC DNA; dsDNA binds to the exterior of the filament while single-stranded (ss)DNA is stabiized in the filament's interior. The ATP-DnaA-oriC complex binds and stabilizes one strand of the AT-rich DNA unwinding element (DUE), permitting loading of DNA polymerase. After initiation quickly degrades to an ADP-DnaA complex that is not apt for DNA replication. Binds acidic phospholipids. The chain is Chromosomal replication initiator protein DnaA from Xylella fastidiosa (strain Temecula1 / ATCC 700964).